A 687-amino-acid polypeptide reads, in one-letter code: Outer dynein arm-docking complex subunit 1 (687 aa).

Coiled coils occupy residues Gln100 to Val193, Arg222 to Lys267, and Ile341 to Arg421. The tract at residues Ser126–Lys147 is disordered. Disordered regions lie at residues Val363 to Asp388, Phe487 to Asp511, and Glu540 to Tyr687. The segment covering Arg366–Asp388 has biased composition (basic and acidic residues). The segment covering Ser544 to Ser556 has biased composition (low complexity). Composition is skewed to polar residues over residues Arg557–Gly611 and Arg620–Gly629. Over residues Ser660–Ser680 the composition is skewed to low complexity.

Belongs to the ODA1/DCC2 family. In terms of assembly, component of the outer dynein arm-docking complex along with ODAD2, ODAD3, ODAD4 and CLXN. Interacts with ODAD3. Interacts with ODAD4; this interaction may facilitate the recruitment and/or attachment of outer dynein arm docking complex proteins, including ODAD1, ODAD3, and ODAD4 to ciliary axonemes. Interacts with DNAH9. Interacts with MNS1. Interacts with PIERCE1 and PIERCE2; the interactions link the outer dynein arms docking complex (ODA-DC) to the internal microtubule inner proteins (MIP) in cilium axoneme. As to expression, expressed in trachea multiciliated cells.

The protein resides in the cytoplasm. It is found in the cytoskeleton. Its subcellular location is the cilium axoneme. Its function is as follows. Component of the outer dynein arm-docking complex (ODA-DC) that mediates outer dynein arms (ODA) binding onto the doublet microtubule. Involved in mediating assembly of both ODAs and their axonemal docking complex onto ciliary microtubules. The protein is Outer dynein arm-docking complex subunit 1 (ODAD1) of Bos taurus (Bovine).